Reading from the N-terminus, the 277-residue chain is Tetrahydroxynaphthalene reductase PfmaG (277 aa).

NADP(+)-binding residues include Ile-36, Asp-82, and Asn-109. Residues Ser-158, Ser-159, and Tyr-173 each act as proton donor in the active site. NADP(+)-binding residues include Tyr-173, Lys-177, Ile-206, and Thr-208. The Lowers pKa of active site Tyr role is filled by Lys-177.

The protein belongs to the short-chain dehydrogenases/reductases (SDR) family.

It catalyses the reaction scytalone + NADP(+) = naphthalene-1,3,6,8-tetrol + NADPH + H(+). It functions in the pathway pigment biosynthesis; melanin biosynthesis. In terms of biological role, tetrahydroxynaphthalene reductase; part of the gene cluster that mediates the biosynthesis of dihydroxynaphthalene (DHN)-melanin, a bluish-green pigment forming a dark layer in the conidial wall that protects the conidia from UV radiations. The first step of the pathway is the production of the pentaketide 1,3,6,8-tetrahydroxynaphthalene (1,3,6,8-THN or T4HN) by the polyketide synthase PfmaE though condensation of acetyl-CoA with malonyl-CoA. T4HN is not stable and easily oxidizes into the stable form flaviolin. T4HN is also substrate of the hydroxynaphthalene reductase PfmaG to yield scytalone. The scytalone dehydratase PfmaJ then reduces scytalone to 1,3,8-THN. 1,3,8-THN is then substrate of the hydroxynaphthalene reductase PfmaI to yield vermelone. Vermelone is further converted by the multicopper oxidase PfmaD to 1,8-DHN. Finally the laccase PFICI_06862 transforms 1,8-DHN to DHN-melanin. The roles of the 5-oxoprolinase PfmaA and the proline iminopeptidase PfmaB within the cluster have not been elucidated yet. The polypeptide is Tetrahydroxynaphthalene reductase PfmaG (Pestalotiopsis fici (strain W106-1 / CGMCC3.15140)).